We begin with the raw amino-acid sequence, 259 residues long: Probable dihydroorotate dehydrogenase B (NAD(+)), electron transfer subunit (259 aa).

The 89-residue stretch at Met-1–Leu-89 folds into the FAD-binding FR-type domain. Positions 211, 216, 219, and 229 each coordinate [2Fe-2S] cluster.

Belongs to the PyrK family. Heterotetramer of 2 PyrK and 2 PyrD type B subunits. Requires [2Fe-2S] cluster as cofactor. FAD serves as cofactor.

The protein operates within pyrimidine metabolism; UMP biosynthesis via de novo pathway; orotate from (S)-dihydroorotate (NAD(+) route): step 1/1. Its function is as follows. Responsible for channeling the electrons from the oxidation of dihydroorotate from the FMN redox center in the PyrD type B subunit to the ultimate electron acceptor NAD(+). This is Probable dihydroorotate dehydrogenase B (NAD(+)), electron transfer subunit from Methanosarcina barkeri (strain Fusaro / DSM 804).